The primary structure comprises 97 residues: MLKMNLANLQLFAHKKGGGSTSNGRDSQAKRLGAKAADGQTVTGGSILFRQRGTHIYPGVNVGRGGDDTLFAKVEGVVRFERKGRDKRQVSVYPVAK.

A propeptide spanning residues 1 to 12 (MLKMNLANLQLF) is cleaved from the precursor. The tract at residues 14–37 (HKKGGGSTSNGRDSQAKRLGAKAA) is disordered.

Belongs to the bacterial ribosomal protein bL27 family. In terms of processing, the N-terminus is cleaved by ribosomal processing cysteine protease Prp.

The polypeptide is Large ribosomal subunit protein bL27 (Streptococcus uberis (strain ATCC BAA-854 / 0140J)).